Reading from the N-terminus, the 708-residue chain is Leukotoxin translocation ATP-binding protein LktB (708 aa).

The Peptidase C39 domain maps to 1–126 (MEANHQRNDL…ACYQGQLILV (126 aa)). One can recognise an ABC transmembrane type-1 domain in the interval 155 to 437 (FLETLIVSIF…LAQLWQDFQQ (283 aa)). The next 5 membrane-spanning stretches (helical) occupy residues 159–179 (LIVSIFLQIFALITPLFFQVV), 192–212 (LNIITVALAIVIIFEIVLSGL), 270–290 (ALTSVLDLLFSFIFFAVMWYY), 296–316 (LVILGSLPCYILWSIFISPIL), and 389–409 (VMVINLWLGAHLVISGDLSIG). Positions 469-704 (IAFKNIRFRY…SNGLYSYLHQ (236 aa)) constitute an ABC transporter domain. ATP is bound at residue 503-510 (GRSGSGKS).

Belongs to the ABC transporter superfamily. Protein-1 exporter (TC 3.A.1.109) family. As to quaternary structure, homodimer.

It localises to the cell inner membrane. It carries out the reaction ATP + H2O + proteinSide 1 = ADP + phosphate + proteinSide 2.. Part of the ABC transporter complex LktBD involved in leukotoxin export. Transmembrane domains (TMD) form a pore in the inner membrane and the ATP-binding domain (NBD) is responsible for energy generation. The chain is Leukotoxin translocation ATP-binding protein LktB (lktB) from Mannheimia glucosida.